A 598-amino-acid polypeptide reads, in one-letter code: Trichothecene efflux pump TRI12 (598 aa).

Residues I42–A62 traverse the membrane as a helical segment. A glycan (N-linked (GlcNAc...) asparagine) is linked at N79. 2 helical membrane passes run P109–T129 and L135–I155. N161 carries an N-linked (GlcNAc...) asparagine glycan. The next 10 membrane-spanning stretches (helical) occupy residues F165–L185, W197–Y217, W241–G261, V273–Y293, F312–M332, A356–V376, W381–N401, I409–L429, A442–I462, and A533–M553. Positions L579–E598 are disordered.

This sequence belongs to the major facilitator superfamily.

Its subcellular location is the cell membrane. Efflux pump that provides the dual role of trichothecene export and self-protection by allowing the fungus to evade the harmful effect of its own trichothecene production. In Fusarium sporotrichioides, this protein is Trichothecene efflux pump TRI12.